The sequence spans 20 residues: Apidaecin 3+ (20 aa).

The tract at residues 1–20 (GKPSRPRPAPIQPRPPHPRL) is disordered.

Belongs to the apidaecin family.

Its subcellular location is the secreted. Antimicrobial peptide active against many Gram-negative enterobacterial and plant-associated bacterial species. Not active against other bacterial species like H.pylori, P.mirabilis, B.pertussis or N.gonorrhoeae. In terms of biological role, among others, also active against S.typhi. Functionally, not active against S.typhi. This Pimpla disparis (Parasitic wasp) protein is Apidaecin 3+.